Consider the following 132-residue polypeptide: Small ribosomal subunit protein eS12 (132 aa).

Residue Ala-2 is modified to N-acetylalanine. An N6-succinyllysine modification is found at Lys-129.

It belongs to the eukaryotic ribosomal protein eS12 family. In terms of assembly, part of the small subunit (SSU) processome, composed of more than 70 proteins and the RNA chaperone small nucleolar RNA (snoRNA) U3. Subunit of the 40S ribosomal complex.

It is found in the nucleus. It localises to the nucleolus. Its function is as follows. Part of the small subunit (SSU) processome, first precursor of the small eukaryotic ribosomal subunit. During the assembly of the SSU processome in the nucleolus, many ribosome biogenesis factors, an RNA chaperone and ribosomal proteins associate with the nascent pre-rRNA and work in concert to generate RNA folding, modifications, rearrangements and cleavage as well as targeted degradation of pre-ribosomal RNA by the RNA exosome. Subunit of the 40S ribosomal complex. The chain is Small ribosomal subunit protein eS12 (Rps12) from Rattus norvegicus (Rat).